We begin with the raw amino-acid sequence, 463 residues long: Elongation factor 1-alpha 1 (463 aa).

The region spanning Lys5 to Thr242 is the tr-type G domain. The tract at residues Gly14–Ser21 is G1. Gly14–Ser21 lines the GTP pocket. The segment at Gly70–Asp74 is G2. The tract at residues Asp91 to Gly94 is G3. Residues Asp91–His95 and Asn153–Asp156 contribute to the GTP site. The segment at Asn153–Asp156 is G4. The G5 stretch occupies residues Ser194 to Trp196. 2 positions are modified to 5-glutamyl glycerylphosphorylethanolamine: Glu301 and Glu374.

It belongs to the TRAFAC class translation factor GTPase superfamily. Classic translation factor GTPase family. EF-Tu/EF-1A subfamily.

The protein resides in the cytoplasm. This protein promotes the GTP-dependent binding of aminoacyl-tRNA to the A-site of ribosomes during protein biosynthesis. This is Elongation factor 1-alpha 1 from Drosophila melanogaster (Fruit fly).